Reading from the N-terminus, the 341-residue chain is NADH-ubiquinone oxidoreductase chain 2 (341 aa).

Transmembrane regions (helical) follow at residues Ile-8 to Leu-28, Phe-61 to Ala-81, Met-95 to Pro-115, Leu-121 to Ile-141, Ile-146 to Leu-166, Leu-174 to Glu-194, Ser-195 to Phe-215, Phe-238 to Pro-258, Phe-273 to Cys-293, and Leu-321 to Leu-341.

Belongs to the complex I subunit 2 family.

The protein resides in the mitochondrion inner membrane. It catalyses the reaction a ubiquinone + NADH + 5 H(+)(in) = a ubiquinol + NAD(+) + 4 H(+)(out). Functionally, core subunit of the mitochondrial membrane respiratory chain NADH dehydrogenase (Complex I) that is believed to belong to the minimal assembly required for catalysis. Complex I functions in the transfer of electrons from NADH to the respiratory chain. The immediate electron acceptor for the enzyme is believed to be ubiquinone. The sequence is that of NADH-ubiquinone oxidoreductase chain 2 (mt:ND2) from Drosophila yakuba (Fruit fly).